The chain runs to 358 residues: Gibberellin 3-beta-dioxygenase 1 (358 aa).

Positions 204–308 (DLNWAQAALQ…RLSVAFLWGP (105 aa)) constitute a Fe2OG dioxygenase domain. Positions 232, 234, and 289 each coordinate Fe cation. Residue Arg299 is part of the active site.

The protein belongs to the iron/ascorbate-dependent oxidoreductase family. GA3OX subfamily. Requires L-ascorbate as cofactor. Fe cation serves as cofactor. As to expression, expressed in stems, roots, leaves, flowers, and siliques. Highly expressed near the nodes in stems and in the stamen filaments of flowers. Detected in developing cotyledons, vegetative shoot apical meristem and non-meristematic, non-elongation regions of the roots. Found in the cortex and the endodermis of the embryo axis in germinating seeds and in the placenta in developing siliques.

It carries out the reaction gibberellin A9 + 2-oxoglutarate + O2 = gibberellin A4 + succinate + CO2. The enzyme catalyses gibberellin A20 + 2-oxoglutarate + O2 = gibberellin A1 + succinate + CO2. The protein operates within plant hormone biosynthesis; gibberellin biosynthesis. Converts the inactive gibberellin (GA) precursors GA9 and GA20 into the bioactives gibberellins GA4 and GA1, respectively. Involved in the production of bioactive GA for vegetative growth and development. The chain is Gibberellin 3-beta-dioxygenase 1 (GA3OX1) from Arabidopsis thaliana (Mouse-ear cress).